The primary structure comprises 91 residues: MTIIGSIIKISNPKKFSIGGGSISNNNFISLYSSKKKKCESNSGSGLFGANNLLGGLLGSLGGNNNKQVVYHPAVSATGETIYIHSVCGCE.

Belongs to the hssA/B family.

The protein is HssA/B-like protein 24 (hssl24) of Dictyostelium discoideum (Social amoeba).